Consider the following 383-residue polypeptide: Subtelomeric hrmA-associated cluster protein AFUB_078970 (383 aa).

Disordered stretches follow at residues 118-145 and 249-318; these read NPVS…KDDD and QATQ…SARP. A compositionally biased stretch (low complexity) spans 119–134; sequence PVSEVPESPPSTVKSS. One can recognise a Myb-like domain in the interval 318–364; sequence PYSAAEDDILQTLVARGLAWEEIEKEFGLRFAKRTMRSLQMRWSRKL.

Its function is as follows. Myb-like domain-containing protein; part of the subtelomeric hrmA-associated cluster (HAC) containing genes that alter the hyphal surface (such as reduced total chitin or increased beta-glucan exposure) and perturb inter-hyphal interactions within the developing biofilms, resulting in a loss of vertically aligned polarized growing filaments. Consequently, this hypoxia-typic morphotype (called H-MORPH) with altered biofilm architecture leads to increased hypoxia fitness, increased host inflammation, rapid disease progression, and mortality in a murine model of invasive aspergillosis. The protein is Subtelomeric hrmA-associated cluster protein AFUB_078970 of Aspergillus fumigatus (strain CBS 144.89 / FGSC A1163 / CEA10) (Neosartorya fumigata).